The primary structure comprises 161 residues: RNA pyrophosphohydrolase (161 aa).

The 144-residue stretch at 6 to 149 (GFRPNVGIIL…KRDVYRKAMV (144 aa)) folds into the Nudix hydrolase domain. The Nudix box signature appears at 38–59 (GGIQFGETPEQALFRELREEIG).

It belongs to the Nudix hydrolase family. RppH subfamily. It depends on a divalent metal cation as a cofactor.

Its function is as follows. Accelerates the degradation of transcripts by removing pyrophosphate from the 5'-end of triphosphorylated RNA, leading to a more labile monophosphorylated state that can stimulate subsequent ribonuclease cleavage. The sequence is that of RNA pyrophosphohydrolase from Acinetobacter baumannii (strain AB307-0294).